The chain runs to 193 residues: MKSLIRPLVVLFVILTAVTGLAYPAVMTVFGQAVFPSQANGSLIEQDGKVVGSALIGQPFDAPKYFWGRLSATAPMPYNAAGSGGSNFGPLNPSLPDQVKARIAALRDAGTDLSKPVPVDLVTASASGLDPEITPAAAAYQVERVAKARHLAPDAVAQLVAANTTGRQFGVLGEPRVNVLKLNLALDAAQAAH.

The helical transmembrane segment at Pro-7–Met-27 threads the bilayer.

Belongs to the KdpC family. In terms of assembly, the system is composed of three essential subunits: KdpA, KdpB and KdpC.

Its subcellular location is the cell inner membrane. In terms of biological role, part of the high-affinity ATP-driven potassium transport (or Kdp) system, which catalyzes the hydrolysis of ATP coupled with the electrogenic transport of potassium into the cytoplasm. This subunit acts as a catalytic chaperone that increases the ATP-binding affinity of the ATP-hydrolyzing subunit KdpB by the formation of a transient KdpB/KdpC/ATP ternary complex. This Burkholderia cenocepacia (strain ATCC BAA-245 / DSM 16553 / LMG 16656 / NCTC 13227 / J2315 / CF5610) (Burkholderia cepacia (strain J2315)) protein is Potassium-transporting ATPase KdpC subunit.